A 586-amino-acid chain; its full sequence is Maltogenic alpha-amylase (586 aa).

Ca(2+) contacts are provided by N147, N152, D153, G172, and D174. Residues H247 and R326 each coordinate substrate. The active-site Nucleophile is the D328. E357 functions as the Proton donor in the catalytic mechanism. Substrate is bound by residues 423-424 (HD), D468, and R472.

The protein belongs to the glycosyl hydrolase 13 family. Ca(2+) serves as cofactor.

It carries out the reaction hydrolysis of (1-&gt;4)-alpha-D-glucosidic linkages in polysaccharides so as to remove successive alpha-maltose residues from the non-reducing ends of the chains.. Converts starch into maltose. The chain is Maltogenic alpha-amylase from Bacillus acidopullulyticus.